A 181-amino-acid chain; its full sequence is Probable RNA 2'-phosphotransferase (181 aa).

The protein belongs to the KptA/TPT1 family.

Removes the 2'-phosphate from RNA via an intermediate in which the phosphate is ADP-ribosylated by NAD followed by a presumed transesterification to release the RNA and generate ADP-ribose 1''-2''-cyclic phosphate (APPR&gt;P). May function as an ADP-ribosylase. This chain is Probable RNA 2'-phosphotransferase, found in Nostoc punctiforme (strain ATCC 29133 / PCC 73102).